The primary structure comprises 295 residues: Acetylglutamate kinase (295 aa).

Substrate contacts are provided by residues 66–67, Arg-88, and Asn-193; that span reads GG.

This sequence belongs to the acetylglutamate kinase family. ArgB subfamily.

It is found in the cytoplasm. It carries out the reaction N-acetyl-L-glutamate + ATP = N-acetyl-L-glutamyl 5-phosphate + ADP. It participates in amino-acid biosynthesis; L-arginine biosynthesis; N(2)-acetyl-L-ornithine from L-glutamate: step 2/4. In terms of biological role, catalyzes the ATP-dependent phosphorylation of N-acetyl-L-glutamate. The sequence is that of Acetylglutamate kinase from Rhizobium etli (strain ATCC 51251 / DSM 11541 / JCM 21823 / NBRC 15573 / CFN 42).